We begin with the raw amino-acid sequence, 585 residues long: NADP-reducing hydrogenase subunit HndD (585 aa).

In terms of domain architecture, 2Fe-2S ferredoxin-type spans 2-85; the sequence is SMLTITIDGK…NMVVKTNSLR (84 aa). Residues Cys36, Cys52, Cys55, and Cys69 each contribute to the [2Fe-2S] cluster site. The region spanning 85–124 is the 4Fe-4S His(Cys)3-ligated-type domain; that stretch reads RVLNARRTVLELLLSDHPKDCLVCAKSGECELQTLAERFG. Positions 101, 105, 108, and 114 each coordinate [4Fe-4S] cluster. 4Fe-4S ferredoxin-type domains lie at 144 to 174 and 185 to 216; these read ASII…VLSG and PAFE…EHEY.

As to quaternary structure, heterotetramer composed of HndA, HndB, HndC and HndD subunits. HndD is probably the hydrogenase subunit. [4Fe-4S] cluster is required as a cofactor.

It carries out the reaction H2 + NADP(+) = NADPH + H(+). Inhibited by oxygen. Functionally, catalyzes the reduction of NADP in the presence of molecular H(2) to yield NADPH. In Solidesulfovibrio fructosivorans (Desulfovibrio fructosivorans), this protein is NADP-reducing hydrogenase subunit HndD (hndD).